The following is a 163-amino-acid chain: MSIPFSNTHYRIPQGFGNLLEGLTREILREQPDNIPAFAAAYFESLLEKREKTNFDPAEWGSKVEDRFYNNHAFEEQEPPEKSDPKQEESQVSGKEEETSVTILDSSEEDKEKEEVAAVKIQAAFRGHVAREEVKKMKTDSLQNEEKEENSEDTGFTSRTHEK.

Disordered stretches follow at residues 57–115 (PAEW…EKEE) and 129–163 (VAREEVKKMKTDSLQNEEKEENSEDTGFTSRTHEK). 2 stretches are compositionally biased toward basic and acidic residues: residues 62-98 (SKVEDRFYNNHAFEEQEPPEKSDPKQEESQVSGKEEE) and 129-139 (VAREEVKKMKT). The IQ domain maps to 114 to 143 (EEVAAVKIQAAFRGHVAREEVKKMKTDSLQ). Residues 153-163 (DTGFTSRTHEK) show a composition bias toward polar residues.

Homodimer. May interact with ROPN1. Testis- and sperm-specific.

It localises to the membrane. Sperm surface zona pellucida binding protein. Helps to bind spermatozoa to the zona pellucida with high affinity. Might function in binding zona pellucida and carbohydrates. The protein is Sperm surface protein Sp17 (SPA17) of Papio hamadryas (Hamadryas baboon).